We begin with the raw amino-acid sequence, 146 residues long: Large ribosomal subunit protein uL15 (146 aa).

Residues 1-46 (MKLHELQPAPGSRKKAVRVGRGIGSGNGKTAGRGHKGQKARSGGGV) form a disordered region. Positions 21–31 (RGIGSGNGKTA) are enriched in gly residues.

It belongs to the universal ribosomal protein uL15 family. In terms of assembly, part of the 50S ribosomal subunit.

Its function is as follows. Binds to the 23S rRNA. The polypeptide is Large ribosomal subunit protein uL15 (Geobacillus thermodenitrificans (strain NG80-2)).